Reading from the N-terminus, the 485-residue chain is Glutamyl-tRNA(Gln) amidotransferase subunit A (485 aa).

Catalysis depends on charge relay system residues Lys79 and Ser154. Ser178 serves as the catalytic Acyl-ester intermediate.

The protein belongs to the amidase family. GatA subfamily. Heterotrimer of A, B and C subunits.

It carries out the reaction L-glutamyl-tRNA(Gln) + L-glutamine + ATP + H2O = L-glutaminyl-tRNA(Gln) + L-glutamate + ADP + phosphate + H(+). In terms of biological role, allows the formation of correctly charged Gln-tRNA(Gln) through the transamidation of misacylated Glu-tRNA(Gln) in organisms which lack glutaminyl-tRNA synthetase. The reaction takes place in the presence of glutamine and ATP through an activated gamma-phospho-Glu-tRNA(Gln). The polypeptide is Glutamyl-tRNA(Gln) amidotransferase subunit A (Carboxydothermus hydrogenoformans (strain ATCC BAA-161 / DSM 6008 / Z-2901)).